The sequence spans 338 residues: Anthranilate phosphoribosyltransferase (338 aa).

5-phospho-alpha-D-ribose 1-diphosphate-binding positions include glycine 81, 84–85 (GD), threonine 89, 91–94 (NIST), 109–117 (KHGNRGVSS), and serine 121. Glycine 81 is an anthranilate binding site. Mg(2+) is bound at residue serine 93. An anthranilate-binding site is contributed by asparagine 112. Arginine 167 serves as a coordination point for anthranilate. Positions 225 and 226 each coordinate Mg(2+).

Belongs to the anthranilate phosphoribosyltransferase family. As to quaternary structure, homodimer. It depends on Mg(2+) as a cofactor.

It catalyses the reaction N-(5-phospho-beta-D-ribosyl)anthranilate + diphosphate = 5-phospho-alpha-D-ribose 1-diphosphate + anthranilate. The protein operates within amino-acid biosynthesis; L-tryptophan biosynthesis; L-tryptophan from chorismate: step 2/5. Its function is as follows. Catalyzes the transfer of the phosphoribosyl group of 5-phosphorylribose-1-pyrophosphate (PRPP) to anthranilate to yield N-(5'-phosphoribosyl)-anthranilate (PRA). The polypeptide is Anthranilate phosphoribosyltransferase (Methanoculleus marisnigri (strain ATCC 35101 / DSM 1498 / JR1)).